The sequence spans 439 residues: Diaminopimelate decarboxylase (439 aa).

K66 carries the post-translational modification N6-(pyridoxal phosphate)lysine. Pyridoxal 5'-phosphate is bound by residues G248 and E290 to R293. Substrate is bound by residues R293, R330, and Y334. The active-site Proton donor is C361. Residues E362 and Y390 each coordinate substrate. Y390 lines the pyridoxal 5'-phosphate pocket.

This sequence belongs to the Orn/Lys/Arg decarboxylase class-II family. LysA subfamily. As to quaternary structure, homodimer. It depends on pyridoxal 5'-phosphate as a cofactor.

It catalyses the reaction meso-2,6-diaminopimelate + H(+) = L-lysine + CO2. The protein operates within amino-acid biosynthesis; L-lysine biosynthesis via DAP pathway; L-lysine from DL-2,6-diaminopimelate: step 1/1. Functionally, specifically catalyzes the decarboxylation of meso-diaminopimelate (meso-DAP) to L-lysine. The protein is Diaminopimelate decarboxylase of Bacillus subtilis (strain 168).